The primary structure comprises 426 residues: Lactate racemase (426 aa).

72-75 is a Ni(II)-pyridinium-3,5-bisthiocarboxylate mononucleotide binding site; the sequence is DHTR. Residues histidine 108 and histidine 174 each act as proton donor/acceptor in the active site. Residues lysine 184 and histidine 200 each contribute to the Ni(II)-pyridinium-3,5-bisthiocarboxylate mononucleotide site. Glutamine 295 and lysine 298 together coordinate substrate.

Belongs to the lactate racemase family. Homodimer. The cofactor is Ni(II)-pyridinium-3,5-bisthiocarboxylate mononucleotide.

The catalysed reaction is (S)-lactate = (R)-lactate. Activation of the apo-enzyme requires the three accessory proteins LarB, LarE and LarC, that are involved in the biosynthesis of the nickel-pincer cofactor of LarA. Its function is as follows. Catalyzes the interconversion between the D- and L-isomers of lactate. The sequence is that of Lactate racemase from Thermoanaerobacterium thermosaccharolyticum (strain ATCC 7956 / DSM 571 / NCIMB 9385 / NCA 3814 / NCTC 13789 / WDCM 00135 / 2032) (Clostridium thermosaccharolyticum).